Consider the following 59-residue polypeptide: Large ribosomal subunit protein uL30 (59 aa).

This sequence belongs to the universal ribosomal protein uL30 family. In terms of assembly, part of the 50S ribosomal subunit.

This is Large ribosomal subunit protein uL30 from Actinobacillus pleuropneumoniae serotype 7 (strain AP76).